Consider the following 293-residue polypeptide: MPVPDHLLLELERGQRWRADGTYRGRYAPSPTGALHLGNLQTALLSWLQARQAGGVWLLRIDDLDTPRNRPGAVEAIQADLHWLGLDWDGEPILQSCRRGLYASWLSWFRRSGALFPCRCSRRELAGLARYPGTCRDGGAGWGWRDRRLPSWRLRVPSRDPDGSGDVVVRRADGFIAYQLATVIDELALGITDVVRGEDLREALPAQRSVYRALQQQPPRFHHGPLRCDAEGRKLSKREASSGLMALRELGLDAPAVVGLLASGLGYGPPGARLSAIELLEDLTQKGIRAGHS.

L-glutamate-binding positions include 26 to 30 and Asp62; that span reads RYAPS. The 'HIGH' region motif lies at 29-39; that stretch reads PSPTGALHLGN. 4 residues coordinate Zn(2+): Cys118, Cys120, Tyr131, and Cys135. L-glutamate contacts are provided by Tyr178 and Arg196. The 'KMSKS' region motif lies at 234–238; it reads KLSKR. Lys237 is a binding site for ATP.

The protein belongs to the class-I aminoacyl-tRNA synthetase family. GluQ subfamily. The cofactor is Zn(2+).

Its function is as follows. Catalyzes the tRNA-independent activation of glutamate in presence of ATP and the subsequent transfer of glutamate onto a tRNA(Asp). Glutamate is transferred on the 2-amino-5-(4,5-dihydroxy-2-cyclopenten-1-yl) moiety of the queuosine in the wobble position of the QUC anticodon. In Parasynechococcus marenigrum (strain WH8102), this protein is Glutamyl-Q tRNA(Asp) synthetase.